Here is a 337-residue protein sequence, read N- to C-terminus: Tetraacyldisaccharide 4'-kinase (337 aa).

ATP is bound at residue 51–58 (HLGGAGKT).

Belongs to the LpxK family.

The enzyme catalyses a lipid A disaccharide + ATP = a lipid IVA + ADP + H(+). Its pathway is glycolipid biosynthesis; lipid IV(A) biosynthesis; lipid IV(A) from (3R)-3-hydroxytetradecanoyl-[acyl-carrier-protein] and UDP-N-acetyl-alpha-D-glucosamine: step 6/6. Transfers the gamma-phosphate of ATP to the 4'-position of a tetraacyldisaccharide 1-phosphate intermediate (termed DS-1-P) to form tetraacyldisaccharide 1,4'-bis-phosphate (lipid IVA). The sequence is that of Tetraacyldisaccharide 4'-kinase from Nitrobacter winogradskyi (strain ATCC 25391 / DSM 10237 / CIP 104748 / NCIMB 11846 / Nb-255).